A 191-amino-acid chain; its full sequence is Programmed cell death protein 6 (191 aa).

Ala-2 carries the N-acetylalanine modification. 5 consecutive EF-hand domains span residues 23 to 58, 59 to 89, 90 to 125, 126 to 161, and 162 to 191; these read PDQSFLWNVFQRVDKDRSGVISDNELQQALSNGTWT, PFNPVTVRSIISMFDRENKAGVNFSEFTGVW, KYITDWQNVFRTYDRDNSGMIDKNELKQALSGFGYR, LSDQFHDILIRKFDRQGRGQIAFDDFIQGCIVLQRL, and TDIFRRYDTDQDGWIQVSYEQYLSMVFSIV. Ca(2+) is bound by residues Asp-36, Asp-38, Ser-40, Val-42, and Glu-47. Ca(2+)-binding residues include Asp-103, Asp-105, Ser-107, Met-109, and Glu-114. Mg(2+) contacts are provided by Asp-169, Asp-171, Asp-173, and Trp-175.

Homodimer and heterodimer; heterodimerizes (via the EF-hand 5) with PEF1. Isoform 1 and isoform 2 self-associate; probably forming homodimers. Interacts with CPNE4 (via VWFA domain). Interacts with PDCD6IP; the interaction is calcium-dependent. Interacts with RBM22. Interacts with PLSCR4. Interacts with ANXA7 and TSG101. Interacts with DAPK1. Interacts with SEC31A; the interaction is calcium-dependent and promotes monoubiquitination of SEC31A. Interacts with ANXA11 (via N-terminus); the interaction is calcium-dependent. Interacts with PLSCR3 (via N-terminus); the interaction is calcium-dependent. Interacts with MCOLN1; the interaction is calcium-dependent. Interacts with KDR; the interaction is calcium-dependent. Interacts with HEBP2; the interaction is calcium-dependent. Interacts with TFG. Isoform 1: Interacts with SHISA5, leading to stabilize it. Isoform 2: Does not interact with SHISA5. Isoform 2: Does not interact with PDCD6IP, TSG101, ANXA7 and ANXA11.

It localises to the endoplasmic reticulum membrane. It is found in the cytoplasmic vesicle. The protein localises to the COPII-coated vesicle membrane. Its subcellular location is the cytoplasm. The protein resides in the nucleus. It localises to the endosome. Functionally, calcium sensor that plays a key role in processes such as endoplasmic reticulum (ER)-Golgi vesicular transport, endosomal biogenesis or membrane repair. Acts as an adapter that bridges unrelated proteins or stabilizes weak protein-protein complexes in response to calcium: calcium-binding triggers exposure of apolar surface, promoting interaction with different sets of proteins thanks to 3 different hydrophobic pockets, leading to translocation to membranes. Involved in ER-Golgi transport by promoting the association between PDCD6IP and TSG101, thereby bridging together the ESCRT-III and ESCRT-I complexes. Together with PEF1, acts as a calcium-dependent adapter for the BCR(KLHL12) complex, a complex involved in ER-Golgi transport by regulating the size of COPII coats. In response to cytosolic calcium increase, the heterodimer formed with PEF1 interacts with, and bridges together the BCR(KLHL12) complex and SEC31 (SEC31A or SEC31B), promoting monoubiquitination of SEC31 and subsequent collagen export, which is required for neural crest specification. Involved in the regulation of the distribution and function of MCOLN1 in the endosomal pathway. Promotes localization and polymerization of TFG at endoplasmic reticulum exit site. Required for T-cell receptor-, Fas-, and glucocorticoid-induced apoptosis. May mediate Ca(2+)-regulated signals along the death pathway: interaction with DAPK1 can accelerate apoptotic cell death by increasing caspase-3 activity. Its role in apoptosis may however be indirect, as suggested by knockout experiments. May inhibit KDR/VEGFR2-dependent angiogenesis; the function involves inhibition of VEGF-induced phosphorylation of the Akt signaling pathway. Has a lower Ca(2+) affinity than isoform 1. This chain is Programmed cell death protein 6 (Pdcd6), found in Mus musculus (Mouse).